We begin with the raw amino-acid sequence, 529 residues long: E3 ubiquitin-protein ligase arih1 (529 aa).

Disordered stretches follow at residues 1–30 and 49–68; these read MDSD…EDDL and GICG…GEEE. A compositionally biased stretch (gly residues) spans 51–64; sequence CGEGGGSALGPGPG. Positions 77–125 are UBA-like; sequence TAEQILQHMVECIREVNEVIQNPATITRILLSHFNWDKEKLMERYFDGN. Residues 154–365 are TRIAD supradomain; the sequence is QDMPCQICYL…SAWYNCNRYN (212 aa). Positions 158, 161, 175, 177, 180, 183, 203, 208, 248, 253, 269, 271, 276, 279, 284, 289, 316, and 319 each coordinate Zn(2+). Residues 158–208 form an RING-type 1 zinc finger; it reads CQICYLNYPNSYFTGLECGHKFCMQCWSEYLTTKIIEEGMGQTISCPAHGC. The segment at 228-289 adopts an IBR-type zinc-finger fold; it reads LKYQHLITNS…GENWHDPVKC (62 aa). An RING-type 2; atypical zinc finger spans residues 316-347; it reads CPKCHVTIEKDGGCNHMVCRNQNCKAEFCWVC. Cys-329 is a catalytic residue. Zn(2+) contacts are provided by Cys-334, Cys-339, Cys-344, Cys-347, His-354, and Cys-361. The segment at 380–529 is ariadne domain; sequence RAALQRYLFY…EKDLWEYIED (150 aa).

It belongs to the RBR family. Ariadne subfamily. Interacts (via the first RING-type zinc finger) with ube2l3. Associates with cullin-RING ubiquitin ligase (CRL) complexes containing neddylated cullin.

The protein resides in the cytoplasm. Its subcellular location is the nucleus. It carries out the reaction [E2 ubiquitin-conjugating enzyme]-S-ubiquitinyl-L-cysteine + [acceptor protein]-L-lysine = [E2 ubiquitin-conjugating enzyme]-L-cysteine + [acceptor protein]-N(6)-ubiquitinyl-L-lysine.. Its pathway is protein modification; protein ubiquitination. With respect to regulation, autoinhibited by the ariadne domain, which masks the second RING-type zinc finger that contains the active site and inhibits the E3 activity. Inhibition is relieved upon binding to neddylated cullin-RING ubiquitin ligase complexes, which activate the E3 ligase activity of ARIH1. Functionally, E3 ubiquitin-protein ligase, which catalyzes ubiquitination of target proteins together with ubiquitin-conjugating enzyme E2 ube2l3. Acts as an atypical E3 ubiquitin-protein ligase by working together with cullin-RING ubiquitin ligase (CRL) complexes and initiating ubiquitination of CRL substrates: associates with CRL complexes and specifically mediates addition of the first ubiquitin on CRLs targets. The initial ubiquitin is then elongated. E3 ubiquitin-protein ligase activity is activated upon binding to neddylated cullin-RING ubiquitin ligase complexes. This chain is E3 ubiquitin-protein ligase arih1 (arih1), found in Xenopus tropicalis (Western clawed frog).